The chain runs to 395 residues: Phosphopentomutase (395 aa).

Residues D10, D294, H299, D335, H336, and H347 each coordinate Mn(2+).

Belongs to the phosphopentomutase family. Mn(2+) is required as a cofactor.

The protein localises to the cytoplasm. It catalyses the reaction 2-deoxy-alpha-D-ribose 1-phosphate = 2-deoxy-D-ribose 5-phosphate. The catalysed reaction is alpha-D-ribose 1-phosphate = D-ribose 5-phosphate. It functions in the pathway carbohydrate degradation; 2-deoxy-D-ribose 1-phosphate degradation; D-glyceraldehyde 3-phosphate and acetaldehyde from 2-deoxy-alpha-D-ribose 1-phosphate: step 1/2. Isomerase that catalyzes the conversion of deoxy-ribose 1-phosphate (dRib-1-P) and ribose 1-phosphate (Rib-1-P) to deoxy-ribose 5-phosphate (dRib-5-P) and ribose 5-phosphate (Rib-5-P), respectively. The sequence is that of Phosphopentomutase from Actinobacillus succinogenes (strain ATCC 55618 / DSM 22257 / CCUG 43843 / 130Z).